Consider the following 397-residue polypeptide: Phosphoglycerate kinase (397 aa).

Substrate is bound by residues 21 to 23 (DFN), Arg-36, 59 to 62 (HCGR), Arg-118, and Arg-151. Residues Lys-201, Glu-323, and 353 to 356 (GGDT) each bind ATP.

Belongs to the phosphoglycerate kinase family. In terms of assembly, monomer.

It is found in the cytoplasm. It carries out the reaction (2R)-3-phosphoglycerate + ATP = (2R)-3-phospho-glyceroyl phosphate + ADP. The protein operates within carbohydrate degradation; glycolysis; pyruvate from D-glyceraldehyde 3-phosphate: step 2/5. The chain is Phosphoglycerate kinase from Bartonella tribocorum (strain CIP 105476 / IBS 506).